The following is a 325-amino-acid chain: GTP 3',8-cyclase (325 aa).

Residues 4–219 (NYNRNINYLR…HGLQQKFGLL (216 aa)) enclose the Radical SAM core domain. Residue arginine 13 participates in GTP binding. The [4Fe-4S] cluster site is built by cysteine 20 and cysteine 24. Position 26 (tyrosine 26) interacts with S-adenosyl-L-methionine. [4Fe-4S] cluster is bound at residue cysteine 27. A GTP-binding site is contributed by arginine 63. An S-adenosyl-L-methionine-binding site is contributed by glycine 67. Position 94 (threonine 94) interacts with GTP. An S-adenosyl-L-methionine-binding site is contributed by serine 118. Lysine 155 serves as a coordination point for GTP. Position 189 (methionine 189) interacts with S-adenosyl-L-methionine. Residues cysteine 254 and cysteine 257 each contribute to the [4Fe-4S] cluster site. A GTP-binding site is contributed by 259 to 261 (RLR). Cysteine 271 is a binding site for [4Fe-4S] cluster.

This sequence belongs to the radical SAM superfamily. MoaA family. In terms of assembly, monomer and homodimer. [4Fe-4S] cluster is required as a cofactor.

The catalysed reaction is GTP + AH2 + S-adenosyl-L-methionine = (8S)-3',8-cyclo-7,8-dihydroguanosine 5'-triphosphate + 5'-deoxyadenosine + L-methionine + A + H(+). It participates in cofactor biosynthesis; molybdopterin biosynthesis. Its function is as follows. Catalyzes the cyclization of GTP to (8S)-3',8-cyclo-7,8-dihydroguanosine 5'-triphosphate. The polypeptide is GTP 3',8-cyclase (Desulforamulus reducens (strain ATCC BAA-1160 / DSM 100696 / MI-1) (Desulfotomaculum reducens)).